A 298-amino-acid polypeptide reads, in one-letter code: Riboflavin transporter (298 aa).

9 consecutive transmembrane segments (helical) span residues leucine 8–alanine 28, phenylalanine 35–leucine 55, valine 79–isoleucine 99, glutamine 101–leucine 121, valine 125–glutamate 145, phenylalanine 151–methionine 171, methionine 184–tryptophan 204, threonine 211–alanine 231, and tryptophan 258–leucine 278. EamA domains follow at residues glycine 10–leucine 144 and leucine 156–threonine 284.

It belongs to the drug/metabolite transporter (DMT) superfamily. 10 TMS drug/metabolite exporter (DME) (TC 2.A.7.3) family.

It is found in the cell membrane. In terms of biological role, transports riboflavin into the cell. The sequence is that of Riboflavin transporter from Vibrio cholerae serotype O1 (strain ATCC 39315 / El Tor Inaba N16961).